We begin with the raw amino-acid sequence, 427 residues long: MPCPRLLAALFCSSGLFAASGDFCDSSLCLHGGTCLLNEDRTPPFYCLCPEGFTGLLCNETEHGPCFPNPCHNDAECQVTDDSHRGDVFIQYICKCPLGYVGIHCETTCTSPLGMQTGAIADSQISASSMHLGFMGLQRWAPELARLHQTGIVNAWTSGNYDKNPWIQVNLMRKMWVTGVVTQGASRAGSAEYLKTFKVAYSTDGRQFQFIQVAGRSGDKIFIGNVNNSGLKINLFDTPLETQYVRLVPIICHRGCTLRFELLGCELNGCTEPLGLKDNTIPNKQITASSYYKTWGLSAFSWFPYYARLDNQGKFNAWTAQTNSASEWLQIDLGSQKRVTGIITQGARDFGHIQYVAAYRVAYGDDGVTWTEYKDPGASESKIFPGNMDNNSHKKNIFETPFQARFVRIQPVAWHNRITLRVELLGC.

An N-terminal signal peptide occupies residues 1–18; it reads MPCPRLLAALFCSSGLFA. EGF-like domains lie at 20 to 59 and 62 to 106; these read SGDF…LLCN and EHGP…IHCE. Disulfide bonds link Cys-24–Cys-35, Cys-29–Cys-47, and Cys-49–Cys-58. Ser-27 carries an O-linked (Fuc...) serine; in PAS-6 glycan. O-linked (Fuc...) threonine; in PAS-7 glycosylation is present at Thr-34. Asn-59 carries an N-linked (GlcNAc...) (hybrid) asparagine; in PAS-6 and PAS-7 glycan. Disulfide bonds link Cys-66-Cys-77, Cys-71-Cys-94, Cys-96-Cys-105, Cys-109-Cys-265, Cys-252-Cys-256, and Cys-270-Cys-427. The short motif at 85–87 is the Cell attachment site element; the sequence is RGD. F5/8 type C domains follow at residues 109 to 265 and 270 to 427; these read CTSP…LLGC and CTEP…LLGC. N-linked (GlcNAc...) (high mannose) asparagine; in PAS-6 glycosylation is present at Asn-227.

Post-translationally, the two O-linked glycans consist of Gal, GlcNAc and Fuc, with probably Fuc as reducing terminal sugar. In terms of tissue distribution, milk and spermatozoan. Also present in epididymis, kidney, heart, lymphatic gland and spleen but not esophagus, small intestine, muscle and liver.

It is found in the membrane. It localises to the secreted. The protein localises to the cytoplasmic vesicle. The protein resides in the secretory vesicle. Its subcellular location is the acrosome membrane. In terms of biological role, contributes to phagocytic removal of apoptotic cells in many tissues. Plays an important role in the maintenance of intestinal epithelial homeostasis and the promotion of mucosal healing. Promotes VEGF-dependent neovascularization. Specific ligand for the alpha-v/beta-3 and alpha-v/beta-5 receptors. Also binds to phosphatidylserine-enriched cell surfaces in a receptor-independent manner. Zona pellucida-binding protein which may play a role in gamete interaction. This chain is Lactadherin (MFGE8), found in Bos taurus (Bovine).